Here is a 210-residue protein sequence, read N- to C-terminus: Somatotropin-1 (210 aa).

The N-terminal stretch at 1 to 22 (MARALVLLSVVLVSLLVNQGRA) is a signal peptide. His-38 is a Zn(2+) binding site. A disulfide bridge links Cys-71 with Cys-183. Glu-192 serves as a coordination point for Zn(2+). Cys-200 and Cys-208 are joined by a disulfide.

The protein belongs to the somatotropin/prolactin family.

Its subcellular location is the secreted. Growth hormone plays an important role in growth control and is involved in the regulation of several anabolic processes. Implicated as an osmoregulatory substance important for seawater adaptation. This Carassius auratus (Goldfish) protein is Somatotropin-1 (gh1).